Consider the following 108-residue polypeptide: Structural protein 1 (108 aa).

At 1-77 (MSRVSEYGVP…LKMQMDRLCN (77 aa)) the chain is on the intravirion side. A helical; Signal-anchor for type II membrane protein transmembrane segment spans residues 78–98 (VLGVVLQMATLALVTYIAFVV). Over 99-108 (HTRATSCKRE) the chain is Virion surface.

Belongs to the varicellovirus ORF1 protein family. In terms of assembly, homodimer. Post-translationally, phosphorylated.

Its subcellular location is the virion membrane. It localises to the host Golgi apparatus membrane. This is Structural protein 1 from Homo sapiens (Human).